Consider the following 424-residue polypeptide: Zona pellucida sperm-binding protein 3 (424 aa).

Positions 1–22 (MELSYRLFICLLLWGSTELCYP) are cleaved as a signal peptide. Position 23 is a pyrrolidone carboxylic acid (Gln23). At 23–387 (QPLWLLQGGA…QWALPSDTSV (365 aa)) the chain is on the extracellular side. A ZP domain is found at 45-307 (ECQEATLMVM…KACSFSKPSN (263 aa)). Disulfide bonds link Cys46–Cys140 and Cys78–Cys99. Asn125 and Asn147 each carry an N-linked (GlcNAc...) asparagine glycan. O-linked (GalNAc...) threonine glycosylation is found at Thr156, Thr162, and Thr163. 2 disulfide bridges follow: Cys217/Cys282 and Cys239/Cys300. Asn272 carries N-linked (GlcNAc...) asparagine glycosylation. The interval 330-356 (PSHSRRQPHVMSQWSRSASRNRRHVTE) is disordered. Residues 351–424 (RRHVTEEADV…TASHPVSASE (74 aa)) constitute a propeptide, removed in mature form. Residues 388–408 (VLLGVGLAVVVSLTLTAVILV) traverse the membrane as a helical segment. The Cytoplasmic portion of the chain corresponds to 409–424 (LTRRCRTASHPVSASE).

The protein belongs to the ZP domain family. ZPC subfamily. Polymers of ZP2 and ZP3 organized into long filaments cross-linked by ZP1 homodimers. Interacts with ZP1 and ZP2. Proteolytically cleaved before the transmembrane segment to yield the secreted ectodomain incorporated in the zona pellucida. In terms of processing, N-glycosylated. Post-translationally, O-glycosylated; removal of O-linked glycans may play an important role in the post-fertilization block to polyspermy. In terms of tissue distribution, expressed in oocytes (at protein level).

The protein resides in the zona pellucida. Its subcellular location is the cell membrane. Its function is as follows. Component of the zona pellucida, an extracellular matrix surrounding oocytes which mediates sperm binding, induction of the acrosome reaction and prevents post-fertilization polyspermy. The zona pellucida is composed of 3 to 4 glycoproteins, ZP1, ZP2, ZP3, and ZP4. ZP3 is essential for sperm binding and zona matrix formation. The sequence is that of Zona pellucida sperm-binding protein 3 (ZP3) from Homo sapiens (Human).